The primary structure comprises 69 residues: DNA gyrase inhibitor YacG (69 aa).

Zn(2+) is bound by residues Cys-12, Cys-15, Cys-31, and Cys-35. A disordered region spans residues 49–69 (RVPVEPKPDEGETPDQAERPQ).

The protein belongs to the DNA gyrase inhibitor YacG family. Interacts with GyrB. Requires Zn(2+) as cofactor.

In terms of biological role, inhibits all the catalytic activities of DNA gyrase by preventing its interaction with DNA. Acts by binding directly to the C-terminal domain of GyrB, which probably disrupts DNA binding by the gyrase. The polypeptide is DNA gyrase inhibitor YacG (Thiobacillus denitrificans (strain ATCC 25259 / T1)).